The chain runs to 181 residues: ATP synthase subunit delta (181 aa).

The protein belongs to the ATPase delta chain family. F-type ATPases have 2 components, F(1) - the catalytic core - and F(0) - the membrane proton channel. F(1) has five subunits: alpha(3), beta(3), gamma(1), delta(1), epsilon(1). F(0) has three main subunits: a(1), b(2) and c(10-14). The alpha and beta chains form an alternating ring which encloses part of the gamma chain. F(1) is attached to F(0) by a central stalk formed by the gamma and epsilon chains, while a peripheral stalk is formed by the delta and b chains.

It localises to the cell membrane. In terms of biological role, f(1)F(0) ATP synthase produces ATP from ADP in the presence of a proton or sodium gradient. F-type ATPases consist of two structural domains, F(1) containing the extramembraneous catalytic core and F(0) containing the membrane proton channel, linked together by a central stalk and a peripheral stalk. During catalysis, ATP synthesis in the catalytic domain of F(1) is coupled via a rotary mechanism of the central stalk subunits to proton translocation. Its function is as follows. This protein is part of the stalk that links CF(0) to CF(1). It either transmits conformational changes from CF(0) to CF(1) or is implicated in proton conduction. This is ATP synthase subunit delta from Mycoplasma mycoides subsp. mycoides SC (strain CCUG 32753 / NCTC 10114 / PG1).